A 171-amino-acid polypeptide reads, in one-letter code: Pro-corazonin (171 aa).

Residues 1–20 form the signal peptide; sequence MLHTRTIALLLVGLVVLVNA. At glutamine 21 the chain carries Pyrrolidone carboxylic acid. The residue at position 31 (asparagine 31) is an Asparagine amide. A propeptide spanning residues 82–171 is cleaved from the precursor; the sequence is FLRNPCDLRV…GFSDHRQKIA (90 aa).

The protein belongs to the corazonin family.

Its subcellular location is the secreted. In terms of biological role, cardioactive peptide. Corazonin is probably involved in the physiological regulation of the heart beat. The chain is Pro-corazonin from Anopheles gambiae (African malaria mosquito).